Reading from the N-terminus, the 190-residue chain is Threonylcarbamoyl-AMP synthase (190 aa).

The YrdC-like domain maps to 7-190; that stretch reads LGSIAQAVDV…ALTGERFRQG (184 aa).

This sequence belongs to the SUA5 family. TsaC subfamily.

It is found in the cytoplasm. The catalysed reaction is L-threonine + hydrogencarbonate + ATP = L-threonylcarbamoyladenylate + diphosphate + H2O. Its function is as follows. Required for the formation of a threonylcarbamoyl group on adenosine at position 37 (t(6)A37) in tRNAs that read codons beginning with adenine. Catalyzes the conversion of L-threonine, HCO(3)(-)/CO(2) and ATP to give threonylcarbamoyl-AMP (TC-AMP) as the acyladenylate intermediate, with the release of diphosphate. The sequence is that of Threonylcarbamoyl-AMP synthase from Enterobacter sp. (strain 638).